A 281-amino-acid polypeptide reads, in one-letter code: Imidazoleglycerol-phosphate dehydratase, chloroplastic (281 aa).

The N-terminal 85 residues, 1-85, are a transit peptide targeting the chloroplast; the sequence is MELYAASHSL…TSLPFHPETR (85 aa). Substrate is bound by residues Glu-95, 121 to 129, 147 to 151, Arg-173, and Arg-195; these read HMLDQLASH and HHTNE. His-121, His-147, His-148, and Glu-151 together coordinate Mn(2+). 4 residues coordinate Mn(2+): His-219, His-243, His-244, and Glu-247. Substrate contacts are provided by residues 243–251 and 273–275; these read HHIIEATFK and SSK.

Belongs to the imidazoleglycerol-phosphate dehydratase family. Mn(2+) is required as a cofactor.

It is found in the plastid. Its subcellular location is the chloroplast. The enzyme catalyses D-erythro-1-(imidazol-4-yl)glycerol 3-phosphate = 3-(imidazol-4-yl)-2-oxopropyl phosphate + H2O. Its pathway is amino-acid biosynthesis; L-histidine biosynthesis; L-histidine from 5-phospho-alpha-D-ribose 1-diphosphate: step 6/9. This chain is Imidazoleglycerol-phosphate dehydratase, chloroplastic, found in Pisum sativum (Garden pea).